The sequence spans 316 residues: Aspartate carbamoyltransferase catalytic subunit (316 aa).

2 residues coordinate carbamoyl phosphate: R66 and T67. K94 provides a ligand contact to L-aspartate. Residues R116, H146, and Q149 each contribute to the carbamoyl phosphate site. Positions 179 and 234 each coordinate L-aspartate. Positions 275 and 276 each coordinate carbamoyl phosphate.

Belongs to the aspartate/ornithine carbamoyltransferase superfamily. ATCase family. As to quaternary structure, heterododecamer (2C3:3R2) of six catalytic PyrB chains organized as two trimers (C3), and six regulatory PyrI chains organized as three dimers (R2).

The catalysed reaction is carbamoyl phosphate + L-aspartate = N-carbamoyl-L-aspartate + phosphate + H(+). The protein operates within pyrimidine metabolism; UMP biosynthesis via de novo pathway; (S)-dihydroorotate from bicarbonate: step 2/3. Catalyzes the condensation of carbamoyl phosphate and aspartate to form carbamoyl aspartate and inorganic phosphate, the committed step in the de novo pyrimidine nucleotide biosynthesis pathway. The polypeptide is Aspartate carbamoyltransferase catalytic subunit (Nitrosomonas eutropha (strain DSM 101675 / C91 / Nm57)).